We begin with the raw amino-acid sequence, 514 residues long: 1,25-dihydroxyvitamin D(3) 24-hydroxylase, mitochondrial (514 aa).

The N-terminal 35 residues, 1-35 (MSCPIDKRRTLIAFLRRLRDLGQPPRSVTSKASAS), are a transit peptide targeting the mitochondrion. Position 462 (C462) interacts with heme.

The protein belongs to the cytochrome P450 family. Requires heme as cofactor.

The protein localises to the mitochondrion. The catalysed reaction is calcitriol + 2 reduced [adrenodoxin] + O2 + 2 H(+) = calcitetrol + 2 oxidized [adrenodoxin] + H2O. It catalyses the reaction calcitetrol + 2 reduced [adrenodoxin] + O2 + 2 H(+) = (1S)-1,25-dihydroxy-24-oxocalciol + 2 oxidized [adrenodoxin] + 2 H2O. It carries out the reaction (1S)-1,25-dihydroxy-24-oxocalciol + 2 reduced [adrenodoxin] + O2 + 2 H(+) = (1S)-1,23,25-trihydroxy-24-oxocalciol + 2 oxidized [adrenodoxin] + H2O. The enzyme catalyses (1S)-1,23-dihydroxy-24,25,26,27-tetranorcalciol + 2 reduced [adrenodoxin] + O2 + 2 H(+) = (1S)-1-hydroxy-23-oxo-24,25,26,27-tetranorcalciol + 2 oxidized [adrenodoxin] + 2 H2O. The catalysed reaction is (1S)-1-hydroxy-23-oxo-24,25,26,27-tetranorcalciol + 2 reduced [adrenodoxin] + O2 + H(+) = calcitroate + 2 oxidized [adrenodoxin] + H2O. It catalyses the reaction calcidiol + 2 reduced [adrenodoxin] + O2 + 2 H(+) = secalciferol + 2 oxidized [adrenodoxin] + H2O. It carries out the reaction secalciferol + 2 reduced [adrenodoxin] + O2 + 2 H(+) = 25-hydroxy-24-oxocalciol + 2 oxidized [adrenodoxin] + 2 H2O. The enzyme catalyses 25-hydroxy-24-oxocalciol + 2 reduced [adrenodoxin] + O2 + 2 H(+) = 23S,25-dihydroxy-24-oxocholecalciferol + 2 oxidized [adrenodoxin] + H2O. The catalysed reaction is 20S,23-dihydroxycholecalciferol + 2 reduced [adrenodoxin] + O2 + 2 H(+) = 20S,23,25-trihydroxycholecalciferol + 2 oxidized [adrenodoxin] + H2O. It catalyses the reaction 20S,23-dihydroxycholecalciferol + 2 reduced [adrenodoxin] + O2 + 2 H(+) = 20S,23,24-trihydroxycholecalciferol + 2 oxidized [adrenodoxin] + H2O. It carries out the reaction 20S-hydroxycholecalciferol + 2 reduced [adrenodoxin] + O2 + 2 H(+) = 20S,25-dihydroxycholecalciferol + 2 oxidized [adrenodoxin] + H2O. The enzyme catalyses 20S-hydroxycholecalciferol + 2 reduced [adrenodoxin] + O2 + 2 H(+) = 20S,24S-dihydroxycholecalciferol + 2 oxidized [adrenodoxin] + H2O. The catalysed reaction is 20S-hydroxycholecalciferol + 2 reduced [adrenodoxin] + O2 + 2 H(+) = 20S,24R-dihydroxycholecalciferol + 2 oxidized [adrenodoxin] + H2O. Functionally, a cytochrome P450 monooxygenase with a key role in vitamin D catabolism and calcium homeostasis. Via C24-oxidation pathway, catalyzes the inactivation of both the vitamin D precursor calcidiol (25-hydroxyvitamin D(3)) and the active hormone calcitriol (1-alpha,25-dihydroxyvitamin D(3)). With initial hydroxylation at C-24 (via C24-oxidation pathway), performs a sequential 6-step oxidation of calcitriol leading to the formation of the biliary metabolite calcitroic acid. Hydroxylates at C-24 or C-25 other vitamin D active metabolites, such as CYP11A1-derived secosteroids 20S-hydroxycholecalciferol and 20S,23-dihydroxycholecalciferol. Mechanistically, uses molecular oxygen inserting one oxygen atom into a substrate, and reducing the second into a water molecule, with two electrons provided by NADPH via FDXR/adrenodoxin reductase and FDX1/adrenodoxin. The polypeptide is 1,25-dihydroxyvitamin D(3) 24-hydroxylase, mitochondrial (Cyp24a1) (Rattus norvegicus (Rat)).